The sequence spans 468 residues: Secretogranin-3 (468 aa).

An N-terminal signal peptide occupies residues 1–19 (MGFLGTGTWILVLVLPIQA). Residues 23 to 69 (PGGSQDKSLHNRELSAERPLNEQIAEAEEDKIKKTYPPENKPGQSNY) form a disordered region. The segment covering 29–42 (KSLHNRELSAERPL) has biased composition (basic and acidic residues). Phosphoserine is present on serine 37. Residue serine 37 is glycosylated (O-linked (Xyl...) (chondroitin sulfate) serine). Residues threonine 216 and threonine 231 are each glycosylated (O-linked (GalNAc...) threonine). Positions 353-406 (KLFPAPSEKSHEETDSTKEEAAKMEKEYGSLKDSTKDDNSNPGGKTDEPKGKTE) are disordered. O-linked (GalNAc...) serine glycosylation is present at serine 359. The span at 360–406 (EKSHEETDSTKEEAAKMEKEYGSLKDSTKDDNSNPGGKTDEPKGKTE) shows a compositional bias: basic and acidic residues. Serine 362 is modified (phosphoserine).

Interacts with CHGA. Interacts with secretogranin II/SCG2. Interacts (via C-terminus) with CPE. In terms of processing, O-glycosylated. In terms of tissue distribution, detected in urine (at protein level). Expressed in brain, heart, kidney, liver and skeletal muscle.

The protein localises to the cytoplasmic vesicle. The protein resides in the secretory vesicle. It is found in the secretory vesicle membrane. Its subcellular location is the secreted. Functionally, member of the granin protein family that regulates the biogenesis of secretory granules. Acts as a sorting receptor for intragranular proteins including chromogranin A/CHGA. May also play a role in angiogenesis. Promotes endothelial proliferation, migration and tube formation through MEK/ERK signaling pathway. This Homo sapiens (Human) protein is Secretogranin-3 (SCG3).